The chain runs to 280 residues: 4-diphosphocytidyl-2-C-methyl-D-erythritol kinase (280 aa).

Lys8 is a catalytic residue. 91–101 (PVSAGLAGGST) lines the ATP pocket. Asp133 is a catalytic residue.

Belongs to the GHMP kinase family. IspE subfamily.

It carries out the reaction 4-CDP-2-C-methyl-D-erythritol + ATP = 4-CDP-2-C-methyl-D-erythritol 2-phosphate + ADP + H(+). It functions in the pathway isoprenoid biosynthesis; isopentenyl diphosphate biosynthesis via DXP pathway; isopentenyl diphosphate from 1-deoxy-D-xylulose 5-phosphate: step 3/6. Catalyzes the phosphorylation of the position 2 hydroxy group of 4-diphosphocytidyl-2C-methyl-D-erythritol. The polypeptide is 4-diphosphocytidyl-2-C-methyl-D-erythritol kinase (Clostridium botulinum (strain Alaska E43 / Type E3)).